Here is a 731-residue protein sequence, read N- to C-terminus: MEVRGLQPKRQKTFARKHLVIVESPAKAQTIEKYLGTQYVVRASMGHVIDLPKSRLAIDIEHDFQPEYITVRGRAQCLKELRTLSKQSLQVFLASDRDREGEAIAYHLAQSIQAYCDTPIKRIVFNEITPHAIRAAIGHPVPIDTAKVNAQKARRVLDRLVGYHLCPLLWHKVKNGLSAGRVQSVALRLICEREVEVKRFVPEEYWTVEGTFEKDKKSFSALLILIQGKKAVFKSKQEATSAIGLFSQSEARVSQIRSFEKNVRPKQPFTTSTLQQCAANRLGFTSRKTMQVAQQLYEGVSLGTHRVGLITYMRTDSVRVSEAAVKEVRAWIATHFSDALPGTPNRYAAKGKSQDAHEAIRPTYVAHTPERIKAHLTRDQIRLYTLIWERFVASQMTDARVRSLTFEITAGPAVFSATETQVIEQGFYRVLKMLSPKDLSKAVLPPTKEGEVVALHNVQSVQHFTQGPVRYTDASIVKMLEEKGIGRPSTYAPTISVLLDRYYVTRIQKQLMPTPLGKVISDLLTTYFHDVVDVSFTARMESKLDEVEEDKIKWNCVIADFYPAFSEKVSTVMKDLNSMRGVFDEKTDVVCSQCGDTMVKKLGRFGFFLACGKFPECRNTQPVPLAKCPRPACDGNIVGKKTRGRKEFYGCTRFPVCDFVTHFKPTFAVCPQCRCFLVEKSNRRVGTYTACVNPECRYVSPTRKNLSLGKEAVLDGSHRGAQDKGAVQHYE.

Residues 17–130 form the Toprim domain; sequence KHLVIVESPA…KRIVFNEITP (114 aa). Residues glutamate 23 and aspartate 96 each contribute to the Mg(2+) site. In terms of domain architecture, Topo IA-type catalytic spans 144 to 569; that stretch reads DTAKVNAQKA…DFYPAFSEKV (426 aa). The interval 178–183 is interaction with DNA; it reads SAGRVQ. Tyrosine 312 serves as the catalytic O-(5'-phospho-DNA)-tyrosine intermediate. 3 C4-type zinc fingers span residues 591-617, 628-657, and 670-696; these read CSQC…FPEC, CPRP…FPVC, and CPQC…NPEC.

It belongs to the type IA topoisomerase family. In terms of assembly, monomer. Mg(2+) serves as cofactor.

The catalysed reaction is ATP-independent breakage of single-stranded DNA, followed by passage and rejoining.. In terms of biological role, releases the supercoiling and torsional tension of DNA, which is introduced during the DNA replication and transcription, by transiently cleaving and rejoining one strand of the DNA duplex. Introduces a single-strand break via transesterification at a target site in duplex DNA. The scissile phosphodiester is attacked by the catalytic tyrosine of the enzyme, resulting in the formation of a DNA-(5'-phosphotyrosyl)-enzyme intermediate and the expulsion of a 3'-OH DNA strand. The free DNA strand then undergoes passage around the unbroken strand, thus removing DNA supercoils. Finally, in the religation step, the DNA 3'-OH attacks the covalent intermediate to expel the active-site tyrosine and restore the DNA phosphodiester backbone. The polypeptide is DNA topoisomerase 1 (Treponema pallidum (strain Nichols)).